We begin with the raw amino-acid sequence, 248 residues long: Triosephosphate isomerase (248 aa).

Position 9–11 (Asn-9–Lys-11) interacts with substrate. The active-site Electrophile is the His-94. Glu-166 serves as the catalytic Proton acceptor. Substrate-binding positions include Gly-172, Ser-212, and Gly-233–Gly-234.

This sequence belongs to the triosephosphate isomerase family. Homodimer.

It is found in the cytoplasm. It catalyses the reaction D-glyceraldehyde 3-phosphate = dihydroxyacetone phosphate. It functions in the pathway carbohydrate biosynthesis; gluconeogenesis. Its pathway is carbohydrate degradation; glycolysis; D-glyceraldehyde 3-phosphate from glycerone phosphate: step 1/1. Involved in the gluconeogenesis. Catalyzes stereospecifically the conversion of dihydroxyacetone phosphate (DHAP) to D-glyceraldehyde-3-phosphate (G3P). This chain is Triosephosphate isomerase, found in Clostridium beijerinckii (strain ATCC 51743 / NCIMB 8052) (Clostridium acetobutylicum).